We begin with the raw amino-acid sequence, 155 residues long: D-aminoacyl-tRNA deacylase (155 aa).

Residues 137–138 (GP) carry the Gly-cisPro motif, important for rejection of L-amino acids motif.

It belongs to the DTD family. As to quaternary structure, homodimer.

It localises to the cytoplasm. The catalysed reaction is glycyl-tRNA(Ala) + H2O = tRNA(Ala) + glycine + H(+). It catalyses the reaction a D-aminoacyl-tRNA + H2O = a tRNA + a D-alpha-amino acid + H(+). Its function is as follows. An aminoacyl-tRNA editing enzyme that deacylates mischarged D-aminoacyl-tRNAs. Also deacylates mischarged glycyl-tRNA(Ala), protecting cells against glycine mischarging by AlaRS. Acts via tRNA-based rather than protein-based catalysis; rejects L-amino acids rather than detecting D-amino acids in the active site. By recycling D-aminoacyl-tRNA to D-amino acids and free tRNA molecules, this enzyme counteracts the toxicity associated with the formation of D-aminoacyl-tRNA entities in vivo and helps enforce protein L-homochirality. This is D-aminoacyl-tRNA deacylase from Nitrosococcus oceani (strain ATCC 19707 / BCRC 17464 / JCM 30415 / NCIMB 11848 / C-107).